Reading from the N-terminus, the 292-residue chain is Cbb3-type cytochrome c oxidase subunit CcoP (292 aa).

A run of 2 helical transmembrane segments spans residues 11-31 and 62-82; these read FGLI…SSLI and VGWI…FFFG. Cytochrome c domains lie at 116 to 195 and 205 to 288; these read ELVD…MAEI and QLID…QSLK. Residues cysteine 129, cysteine 132, histidine 133, methionine 174, cysteine 219, cysteine 222, histidine 223, and methionine 264 each coordinate heme c.

The protein belongs to the CcoP / FixP family. As to quaternary structure, component of the cbb3-type cytochrome c oxidase at least composed of CcoN, CcoO, CcoQ and CcoP. Requires heme c as cofactor.

It is found in the cell inner membrane. Its pathway is energy metabolism; oxidative phosphorylation. C-type cytochrome. Part of the cbb3-type cytochrome c oxidase complex. CcoP subunit is required for transferring electrons from donor cytochrome c via its heme groups to CcoO subunit. From there, electrons are shuttled to the catalytic binuclear center of CcoN subunit where oxygen reduction takes place. The complex also functions as a proton pump. The chain is Cbb3-type cytochrome c oxidase subunit CcoP from Helicobacter pylori (Campylobacter pylori).